The chain runs to 102 residues: Small ribosomal subunit protein uS10 (102 aa).

It belongs to the universal ribosomal protein uS10 family. In terms of assembly, part of the 30S ribosomal subunit.

Functionally, involved in the binding of tRNA to the ribosomes. The polypeptide is Small ribosomal subunit protein uS10 (Heliobacterium modesticaldum (strain ATCC 51547 / Ice1)).